The primary structure comprises 647 residues: MSVSNPEFSESSILRPVEISRQTHPHKKGASIALMFAAIGIVFGDIGTSPLYALKECFSPDHGIPFSADAVYGVISMVFWAFAIVVSLKYVLFVMRANNHGEGGILALMALALRTAPNGSKRSLLIIMAGVFGACMFYGDAIITPAISVLSAVEGLEVISSDLTRFVLPITVLILVILFFIQKTGTEVVGKLFGPIMMVWFITIGLMGLHQVIQNPAIFAAVNPMFAIRFLIEHSLQGFIVLGAVFLVLTGAEALYADMGHFGIRPIRMGWFFIVMPCLLLNYFGQGAMFLANPETISNPFFLMVPEVFVFPLVILATAATVIASQAVISGAFSMTSQAILLGFVPRMKVRHTSDREIGQIYMPFVNWTLLFLVIVVVLAFKKSENLAAAYGIAVTTTMIVTTLLAAIVMRVVWRWNTILVTLVIGAFLTVDLAFLTANLLKIMEGGWFPLLLGAICFLFLMTWYQGRKLLRQNAVNNGIELKGFIDALMQHPPHRVEGTALFLTAHVDYVPVSFLHNLKHNHVLHERVFFLKVSIWDVPYVKDEERITLRDMGNGIYVVRAVYGFNETPDMGQIIELIEKSADLKFDMMNTSFFLSRDTIVSTEIPGMAMWRERLFCWMYQNAGRQSDFFKIPANRLVELGAKVEI.

A run of 13 helical transmembrane segments spans residues 32 to 52 (IALM…SPLY), 74 to 94 (VISM…VLFV), 124 to 144 (LLII…AIIT), 166 to 186 (FVLP…KTGT), 193 to 213 (FGPI…HQVI), 230 to 250 (FLIE…LVLT), 271 to 291 (WFFI…AMFL), 300 to 320 (PFFL…ATAA), 322 to 342 (VIAS…AILL), 361 to 381 (IYMP…VLAF), 390 to 410 (AYGI…AIVM), 418 to 438 (TILV…FLTA), and 443 to 463 (IMEG…FLMT).

This sequence belongs to the HAK/KUP transporter (TC 2.A.72) family.

Its subcellular location is the cell inner membrane. It catalyses the reaction K(+)(in) + H(+)(in) = K(+)(out) + H(+)(out). In terms of biological role, transport of potassium into the cell. Likely operates as a K(+):H(+) symporter. This chain is Probable potassium transport system protein Kup, found in Polynucleobacter asymbioticus (strain DSM 18221 / CIP 109841 / QLW-P1DMWA-1) (Polynucleobacter necessarius subsp. asymbioticus).